The sequence spans 200 residues: Anthranilate synthase component 2 (200 aa).

Residues 3–196 enclose the Glutamine amidotransferase type-1 domain; sequence NILLLDNIDS…IHWASLKYIT (194 aa). 57–59 is an L-glutamine binding site; it reads GPS. Cys84 (nucleophile; for GATase activity) is an active-site residue. L-glutamine is bound by residues Gln88 and 134-135; that span reads SL. Residues His170 and Glu172 each act as for GATase activity in the active site.

Heterotetramer consisting of two non-identical subunits: a beta subunit (TrpG) and a large alpha subunit (TrpE).

It carries out the reaction chorismate + L-glutamine = anthranilate + pyruvate + L-glutamate + H(+). Its pathway is amino-acid biosynthesis; L-tryptophan biosynthesis; L-tryptophan from chorismate: step 1/5. In terms of biological role, part of a heterotetrameric complex that catalyzes the two-step biosynthesis of anthranilate, an intermediate in the biosynthesis of L-tryptophan. In the first step, the glutamine-binding beta subunit (TrpG) of anthranilate synthase (AS) provides the glutamine amidotransferase activity which generates ammonia as a substrate that, along with chorismate, is used in the second step, catalyzed by the large alpha subunit of AS (TrpE) to produce anthranilate. In the absence of TrpG, TrpE can synthesize anthranilate directly from chorismate and high concentrations of ammonia. The protein is Anthranilate synthase component 2 (trpG) of Buchnera aphidicola subsp. Acyrthosiphon pisum (strain APS) (Acyrthosiphon pisum symbiotic bacterium).